An 88-amino-acid chain; its full sequence is uncharacterized protein (88 aa).

Positions 1 to 23 are cleaved as a signal peptide; it reads MAVSGLRLTIVWGLLVLILTCQA. The segment covering 25-40 has biased composition (basic and acidic residues); the sequence is DKPEGKPDEQPHDSGK. A disordered region spans residues 25–45; the sequence is DKPEGKPDEQPHDSGKNSEPA.

Its subcellular location is the secreted. This is an uncharacterized protein from Bos taurus (Bovine).